Reading from the N-terminus, the 387-residue chain is Mannitol-1-phosphate 5-dehydrogenase (387 aa).

3–14 lines the NAD(+) pocket; it reads ALHFGAGNIGRG.

It belongs to the mannitol dehydrogenase family.

It catalyses the reaction D-mannitol 1-phosphate + NAD(+) = beta-D-fructose 6-phosphate + NADH + H(+). The protein is Mannitol-1-phosphate 5-dehydrogenase of Yersinia pseudotuberculosis serotype O:3 (strain YPIII).